The chain runs to 168 residues: MKFQHTFIALLSLLTYANAYDYFTTTLANQNPVCASVDVIQNVCTEVCGRFVRYIPDATNTNQFTFAEYTTNQCTVQVTPAVTNTFTCADQTSSHALGSDWSGVCKITATPAPTVTPTVTPTVTPTVTPTPTNTPNPTPSQTSTTTGSASTVVASLSLIIFSMILSLC.

The first 19 residues, 1 to 19, serve as a signal peptide directing secretion; the sequence is MKFQHTFIALLSLLTYANA. Thr-110, Thr-114, Thr-116, Thr-118, Thr-120, Thr-122, Thr-124, Thr-126, Thr-128, Thr-130, Thr-132, Thr-134, and Thr-138 each carry an O-linked (GlcNAc) threonine glycan. 3 tandem repeats follow at residues 116-119, 120-123, and 124-127. The tract at residues 116–127 is 3 X 4 AA tandem repeats of T-P-T-V; that stretch reads TPTVTPTVTPTV. The segment covering 116 to 131 has biased composition (low complexity); that stretch reads TPTVTPTVTPTVTPTP. The disordered stretch occupies residues 116–147; the sequence is TPTVTPTVTPTVTPTPTNTPNPTPSQTSTTTG. O-linked (GlcNAc) serine glycosylation occurs at Ser-140. The GPI-like-anchor amidated glycine moiety is linked to residue Gly-147. Positions 148 to 168 are cleaved as a propeptide — removed in mature form; sequence SASTVVASLSLIIFSMILSLC.

This sequence belongs to the ponticulin family. O-glycosylated in the repeat region. The oligosaccharides contain N-acetylglucosamine and fucose as the major constituents. In terms of processing, the GPI-like-anchor contains a phosphoceramide group, rather than a phosphatidyl group.

Its subcellular location is the cell membrane. May bind F-actin and nucleates actin assembly. This chain is Prespore-specific protein A (pspA), found in Dictyostelium discoideum (Social amoeba).